The primary structure comprises 107 residues: Iron-binding protein IscA (107 aa).

Cys-35, Cys-99, and Cys-101 together coordinate Fe cation.

It belongs to the HesB/IscA family. As to quaternary structure, homodimer; may form tetramers and higher multimers. Fe cation is required as a cofactor.

Is able to transfer iron-sulfur clusters to apo-ferredoxin. Multiple cycles of [2Fe2S] cluster formation and transfer are observed, suggesting that IscA acts catalytically. Recruits intracellular free iron so as to provide iron for the assembly of transient iron-sulfur cluster in IscU in the presence of IscS, L-cysteine and the thioredoxin reductase system TrxA/TrxB. This Serratia proteamaculans (strain 568) protein is Iron-binding protein IscA.